The following is a 316-amino-acid chain: Olfactory receptor 5AP2 (316 aa).

At 1 to 34 the chain is on the extracellular side; it reads MRLMKEVRGRNQTEVTEFLLLGLSDNPDLQGVLF. The N-linked (GlcNAc...) asparagine glycan is linked to N11. The chain crosses the membrane as a helical span at residues 35–55; that stretch reads ALFLLIYMANMVGNLGMIVLI. Residue K56 is a topological domain, cytoplasmic. The chain crosses the membrane as a helical span at residues 57 to 77; the sequence is IDLCLHTPMYFFLSSLSFVDA. At 78 to 104 the chain is on the extracellular side; it reads SYSSSVTPKMLVNLMAENKAISFHGCA. A disulfide bridge links C103 with C195. The chain crosses the membrane as a helical span at residues 105 to 125; the sequence is AQFYFFGSFLGTECFLLAMMA. The Cytoplasmic portion of the chain corresponds to 126–135; the sequence is YDRYAAIWNP. The helical transmembrane segment at 136 to 156 threads the bilayer; that stretch reads LLYPVLVSGRICFLLIATSFL. The Extracellular portion of the chain corresponds to 157–210; that stretch reads AGCGNAAIHTGMTFRLSFCGSNRINHFYCDTPPLLKLSCSDTHFNGIVIMAFSS. A helical membrane pass occupies residues 211-231; it reads FIVISCVMIVLISYLCIFIAV. Topologically, residues 232-245 are cytoplasmic; it reads LKMPSLEGRHKAFS. The helical transmembrane segment at 246–266 threads the bilayer; that stretch reads TCASYLMAVTIFFGTILFMYL. The Extracellular segment spans residues 267 to 278; the sequence is RPTSSYSMEQDK. Residues 279-299 form a helical membrane-spanning segment; it reads VVSVFYTVIIPVLNPLIYSLK. Over 300-316 the chain is Cytoplasmic; the sequence is NKDVKKALKKILWKHIL.

It belongs to the G-protein coupled receptor 1 family.

It is found in the cell membrane. Its function is as follows. Odorant receptor. In Homo sapiens (Human), this protein is Olfactory receptor 5AP2.